Reading from the N-terminus, the 473-residue chain is Lactate utilization protein B (473 aa).

2 4Fe-4S ferredoxin-type domains span residues 302–332 and 351–380; these read GSEF…GHSY and YDDY…LHDL. Positions 311, 314, 317, 321, 364, 367, and 371 each coordinate [4Fe-4S] cluster.

The protein belongs to the LutB/YkgF family.

Its function is as follows. Is involved in L-lactate degradation and allows cells to grow with lactate as the sole carbon source. Has probably a role as an electron transporter during oxidation of L-lactate. This chain is Lactate utilization protein B, found in Bacillus cereus (strain G9842).